Consider the following 543-residue polypeptide: CTP synthase (543 aa).

Positions 1–267 (MKQTKYIFVT…LSPIAEILDL (267 aa)) are amidoligase domain. CTP is bound at residue Ser15. Residue Ser15 coordinates UTP. ATP contacts are provided by residues 16 to 21 (SLGKGI) and Asp73. The Mg(2+) site is built by Asp73 and Glu141. Residues 148-150 (DIE), 188-193 (KTKPTQ), and Lys224 contribute to the CTP site. Residues 188-193 (KTKPTQ) and Lys224 each bind UTP. Positions 292–543 (KIAFVGKYVD…IKAAINYEDN (252 aa)) constitute a Glutamine amidotransferase type-1 domain. Residue Gly354 coordinates L-glutamine. Cys381 functions as the Nucleophile; for glutamine hydrolysis in the catalytic mechanism. L-glutamine is bound by residues 382 to 385 (LGMQ), Glu405, and Arg473. Residues His516 and Glu518 contribute to the active site.

This sequence belongs to the CTP synthase family. In terms of assembly, homotetramer.

It carries out the reaction UTP + L-glutamine + ATP + H2O = CTP + L-glutamate + ADP + phosphate + 2 H(+). The enzyme catalyses L-glutamine + H2O = L-glutamate + NH4(+). The catalysed reaction is UTP + NH4(+) + ATP = CTP + ADP + phosphate + 2 H(+). Its pathway is pyrimidine metabolism; CTP biosynthesis via de novo pathway; CTP from UDP: step 2/2. With respect to regulation, allosterically activated by GTP, when glutamine is the substrate; GTP has no effect on the reaction when ammonia is the substrate. The allosteric effector GTP functions by stabilizing the protein conformation that binds the tetrahedral intermediate(s) formed during glutamine hydrolysis. Inhibited by the product CTP, via allosteric rather than competitive inhibition. Functionally, catalyzes the ATP-dependent amination of UTP to CTP with either L-glutamine or ammonia as the source of nitrogen. Regulates intracellular CTP levels through interactions with the four ribonucleotide triphosphates. This chain is CTP synthase, found in Campylobacter jejuni subsp. jejuni serotype O:2 (strain ATCC 700819 / NCTC 11168).